Consider the following 106-residue polypeptide: Malonate decarboxylase acyl carrier protein (106 aa).

The residue at position 28 (serine 28) is an O-(phosphoribosyl dephospho-coenzyme A)serine.

This sequence belongs to the MdcC family. Covalently binds the prosthetic group of malonate decarboxylase.

The protein resides in the cytoplasm. Its function is as follows. Subunit of malonate decarboxylase, it is an acyl carrier protein to which acetyl and malonyl thioester residues are bound via a 2'-(5''-phosphoribosyl)-3'-dephospho-CoA prosthetic group and turn over during the catalytic mechanism. In Stenotrophomonas maltophilia (strain R551-3), this protein is Malonate decarboxylase acyl carrier protein.